A 58-amino-acid polypeptide reads, in one-letter code: Weak neurotoxin D2B (58 aa).

3 disulfides stabilise this stretch: Cys-3-Cys-24, Cys-17-Cys-41, and Cys-43-Cys-54.

In terms of tissue distribution, expressed by the venom gland.

It is found in the secreted. Functionally, binds to muscle nicotinic acetylcholine receptor (nAChR) and inhibit acetylcholine from binding to the receptor, thereby impairing neuromuscular transmission. This chain is Weak neurotoxin D2B, found in Micrurus pyrrhocryptus (Coral snake).